A 210-amino-acid chain; its full sequence is N-(5'-phosphoribosyl)anthranilate isomerase (210 aa).

Belongs to the TrpF family.

The catalysed reaction is N-(5-phospho-beta-D-ribosyl)anthranilate = 1-(2-carboxyphenylamino)-1-deoxy-D-ribulose 5-phosphate. Its pathway is amino-acid biosynthesis; L-tryptophan biosynthesis; L-tryptophan from chorismate: step 3/5. In Eremothecium gossypii (strain ATCC 10895 / CBS 109.51 / FGSC 9923 / NRRL Y-1056) (Yeast), this protein is N-(5'-phosphoribosyl)anthranilate isomerase (TRP1).